A 463-amino-acid polypeptide reads, in one-letter code: L-seryl-tRNA(Sec) selenium transferase (463 aa).

Lysine 295 bears the N6-(pyridoxal phosphate)lysine mark.

Belongs to the SelA family. As to quaternary structure, homodecamer; pentamer of dimers. Binds only one seryl-tRNA(Sec) per dimer. The cofactor is pyridoxal 5'-phosphate.

It is found in the cytoplasm. It carries out the reaction L-seryl-tRNA(Sec) + selenophosphate + H(+) = L-selenocysteinyl-tRNA(Sec) + phosphate. It participates in aminoacyl-tRNA biosynthesis; selenocysteinyl-tRNA(Sec) biosynthesis; selenocysteinyl-tRNA(Sec) from L-seryl-tRNA(Sec) (bacterial route): step 1/1. Its function is as follows. Converts seryl-tRNA(Sec) to selenocysteinyl-tRNA(Sec) required for selenoprotein biosynthesis. This is L-seryl-tRNA(Sec) selenium transferase from Salmonella schwarzengrund (strain CVM19633).